Consider the following 180-residue polypeptide: ATP synthase subunit delta (180 aa).

Belongs to the ATPase delta chain family. F-type ATPases have 2 components, F(1) - the catalytic core - and F(0) - the membrane proton channel. F(1) has five subunits: alpha(3), beta(3), gamma(1), delta(1), epsilon(1). F(0) has three main subunits: a(1), b(2) and c(10-14). The alpha and beta chains form an alternating ring which encloses part of the gamma chain. F(1) is attached to F(0) by a central stalk formed by the gamma and epsilon chains, while a peripheral stalk is formed by the delta and b chains.

It localises to the cell membrane. Its function is as follows. F(1)F(0) ATP synthase produces ATP from ADP in the presence of a proton or sodium gradient. F-type ATPases consist of two structural domains, F(1) containing the extramembraneous catalytic core and F(0) containing the membrane proton channel, linked together by a central stalk and a peripheral stalk. During catalysis, ATP synthesis in the catalytic domain of F(1) is coupled via a rotary mechanism of the central stalk subunits to proton translocation. Functionally, this protein is part of the stalk that links CF(0) to CF(1). It either transmits conformational changes from CF(0) to CF(1) or is implicated in proton conduction. This chain is ATP synthase subunit delta, found in Enterococcus faecalis (strain ATCC 700802 / V583).